The chain runs to 418 residues: Serine hydroxymethyltransferase (418 aa).

Residues Leu-121 and Gly-125–Leu-127 contribute to the (6S)-5,6,7,8-tetrahydrofolate site. Lys-230 carries the post-translational modification N6-(pyridoxal phosphate)lysine. Position 356–358 (Ser-356–Phe-358) interacts with (6S)-5,6,7,8-tetrahydrofolate.

Belongs to the SHMT family. As to quaternary structure, homodimer. The cofactor is pyridoxal 5'-phosphate.

Its subcellular location is the cytoplasm. The catalysed reaction is (6R)-5,10-methylene-5,6,7,8-tetrahydrofolate + glycine + H2O = (6S)-5,6,7,8-tetrahydrofolate + L-serine. It functions in the pathway one-carbon metabolism; tetrahydrofolate interconversion. The protein operates within amino-acid biosynthesis; glycine biosynthesis; glycine from L-serine: step 1/1. In terms of biological role, catalyzes the reversible interconversion of serine and glycine with tetrahydrofolate (THF) serving as the one-carbon carrier. This reaction serves as the major source of one-carbon groups required for the biosynthesis of purines, thymidylate, methionine, and other important biomolecules. Also exhibits THF-independent aldolase activity toward beta-hydroxyamino acids, producing glycine and aldehydes, via a retro-aldol mechanism. The protein is Serine hydroxymethyltransferase of Shewanella halifaxensis (strain HAW-EB4).